The chain runs to 749 residues: MEVVPAEVNSLLPEEIMDTGITLVDDDSIEAVIVSSPIPMETELEEIVNINSTGDSTATPISTEPITVYSNHTNQVAVNTTITKADSNTTVKPAFPSGLQKLGAQTPVTISANQIILNKVSQTSDLKLGNQTLKPDGQKLILTTLGKSGSPIVLALPHSQLPQAQKVTTQAQSGDAKLPPQQIKVVTIGGRPEVKPVIGVSALTPGSQLINTTTQPSVLQTQQLKTVQIAKKPRTPTSGPVITKLIFAKPINSKAVTGQTTQVSPPVIAGRVLSQSTPGTPSKTITISESGVIGSTLNSTTQTPNKIAISPLKSPNKAVKSTVQTITVGGVSTSQFKTIIPLATAPNVQQIQVPGSKFHYVRLVTATSASSSTQPVSQNPSTNTQPLQQAKPVVVNTTPVRMSVPIVSAQAVKQVVPKPINPTSQIVTTSQPQQRLIMPATPLPQIQPNLTNLPPGTVLAPAPGTGNVGYAVLPAQYVTQLQQSSYVSIASNSTFTGTSGIQTQARLPFNGIIPSESASRPRKPCNCTKSLCLKLYCDCFANGEFCNNCNCTNCYNNLEHENERQKAIKACLDRNPEAFKPKIGKGKEGESDRRHSKGCNCKRSGCLKNYCECYEAKIMCSSICKCIGCKNFEESPERKTLMHLADAAEVRVQQQTAAKTKLSSQISDLLTRPTPALNSGGGKLPFTFVTKEVAEATCNCLLAQAEQADKKGKSKAAAERMILEEFGRCLMSVINSAGKAKSDPCAMNC.

Residue Lys139 forms a Glycyl lysine isopeptide (Lys-Gly) (interchain with G-Cter in SUMO2) linkage. An N6-acetyllysine mark is found at Lys244 and Lys249. Ser264, Ser282, Ser310, and Ser314 each carry phosphoserine. Lys357 participates in a covalent cross-link: Glycyl lysine isopeptide (Lys-Gly) (interchain with G-Cter in SUMO2). A disordered region spans residues 369–388; sequence ASSSTQPVSQNPSTNTQPLQ. The region spanning 521 to 634 is the CRC domain; the sequence is PRKPCNCTKS…KCIGCKNFEE (114 aa). A DNA-binding region spans residues 523 to 536; it reads KPCNCTKSLCLKLY. 9 residues coordinate Zn(2+): Cys525, Cys527, Cys532, Cys537, Cys539, Cys546, Cys549, Cys551, and Cys554. The tract at residues 583–596 is linker; the sequence is IGKGKEGESDRRHS. Zn(2+)-binding residues include Cys599, Cys601, Cys606, Cys611, Cys613, Cys620, Cys624, Cys626, and Cys629. The interval 599 to 612 is DNA-binding; that stretch reads CNCKRSGCLKNYCE. The residue at position 635 (Ser635) is a Phosphoserine. Residues Lys639, Lys659, and Lys661 each participate in a glycyl lysine isopeptide (Lys-Gly) (interchain with G-Cter in SUMO2) cross-link.

The protein belongs to the lin-54 family. Component of the DREAM complex (also named LINC complex) at least composed of E2F4, E2F5, LIN9, LIN37, LIN52, LIN54, MYBL1, MYBL2, RBL1, RBL2, RBBP4, TFDP1 and TFDP2. The complex exists in quiescent cells where it represses cell cycle-dependent genes. It dissociates in S phase when LIN9, LIN37, LIN52 and LIN54 form a subcomplex that binds to MYBL2.

The protein resides in the nucleus. Functionally, component of the DREAM complex, a multiprotein complex that can both act as a transcription activator or repressor depending on the context. In G0 phase, the complex binds to more than 800 promoters and is required for repression of E2F target genes. In S phase, the complex selectively binds to the promoters of G2/M genes whose products are required for mitosis and participates in their cell cycle dependent activation. In the complex, acts as a DNA-binding protein that binds the promoter of CDK1 in a sequence-specific manner. Specifically recognizes the consensus motif 5'-TTYRAA-3' in target DNA. In Homo sapiens (Human), this protein is Protein lin-54 homolog (LIN54).